A 401-amino-acid chain; its full sequence is Phosphoglycerate kinase (401 aa).

Substrate is bound by residues 21–23 (DFN), R36, 59–62 (HLGR), R119, and R160. Residues K212, E330, and 357 to 360 (GGDS) contribute to the ATP site.

It belongs to the phosphoglycerate kinase family. In terms of assembly, monomer.

The protein resides in the cytoplasm. The enzyme catalyses (2R)-3-phosphoglycerate + ATP = (2R)-3-phospho-glyceroyl phosphate + ADP. The protein operates within carbohydrate degradation; glycolysis; pyruvate from D-glyceraldehyde 3-phosphate: step 2/5. In Limosilactobacillus fermentum (strain NBRC 3956 / LMG 18251) (Lactobacillus fermentum), this protein is Phosphoglycerate kinase.